We begin with the raw amino-acid sequence, 138 residues long: Putative pre-16S rRNA nuclease (138 aa).

Belongs to the YqgF nuclease family.

Its subcellular location is the cytoplasm. Functionally, could be a nuclease involved in processing of the 5'-end of pre-16S rRNA. In Salmonella typhimurium (strain LT2 / SGSC1412 / ATCC 700720), this protein is Putative pre-16S rRNA nuclease.